We begin with the raw amino-acid sequence, 304 residues long: Ferrochelatase (304 aa).

Residues His-169 and Glu-241 each contribute to the Fe cation site.

Belongs to the ferrochelatase family.

It localises to the cytoplasm. The catalysed reaction is heme b + 2 H(+) = protoporphyrin IX + Fe(2+). Its pathway is porphyrin-containing compound metabolism; protoheme biosynthesis; protoheme from protoporphyrin-IX: step 1/1. Its function is as follows. Catalyzes the ferrous insertion into protoporphyrin IX. The polypeptide is Ferrochelatase (Thermoplasma volcanium (strain ATCC 51530 / DSM 4299 / JCM 9571 / NBRC 15438 / GSS1)).